Reading from the N-terminus, the 668-residue chain is Kelch repeat-containing protein ARB_01230 (668 aa).

A signal peptide spans 1–32; that stretch reads MEVGRFASKSASMTYLLLVLLVGFILPQQGQH. Over 33 to 522 the chain is Extracellular; it reads AHARTLARRD…GSGSDGPNIA (490 aa). Asparagine 60 carries an N-linked (GlcNAc...) asparagine glycan. 2 Kelch repeats span residues 62-108 and 125-176; these read TLYI…PRGD and SLFL…ANIP. N-linked (GlcNAc...) asparagine glycosylation is found at asparagine 251 and asparagine 291. Kelch repeat units follow at residues 283–331, 340–395, 396–445, and 463–509; these read ILGL…AVAA, QVYL…IWNS, QIVV…ASQT, and VQSV…GPHA. Residues 523-543 traverse the membrane as a helical segment; it reads AIVAGVIAGCLGVLAIYLGFV. Topologically, residues 544-668 are cytoplasmic; it reads TWLYRRRLAI…PRQTLRVINQ (125 aa). Positions 611–642 are disordered; sequence DNQRHNHTRSSSGGNFDHLAQPERPSTSSSVE.

It localises to the membrane. Its subcellular location is the secreted. This chain is Kelch repeat-containing protein ARB_01230, found in Arthroderma benhamiae (strain ATCC MYA-4681 / CBS 112371) (Trichophyton mentagrophytes).